Consider the following 210-residue polypeptide: Imidazoleglycerol-phosphate dehydratase (210 aa).

Belongs to the imidazoleglycerol-phosphate dehydratase family.

It is found in the cytoplasm. It catalyses the reaction D-erythro-1-(imidazol-4-yl)glycerol 3-phosphate = 3-(imidazol-4-yl)-2-oxopropyl phosphate + H2O. The protein operates within amino-acid biosynthesis; L-histidine biosynthesis; L-histidine from 5-phospho-alpha-D-ribose 1-diphosphate: step 6/9. This Mycobacterium bovis (strain ATCC BAA-935 / AF2122/97) protein is Imidazoleglycerol-phosphate dehydratase.